The chain runs to 464 residues: NADH-quinone oxidoreductase subunit N 1 (464 aa).

Helical transmembrane passes span 6-26 (ILPE…ELFL), 33-53 (FLSV…FFVN), 65-85 (VDAL…FVLL), 98-118 (YGEL…MISS), 122-142 (AIIF…VGLF), 155-175 (YLVI…LVYA), 192-212 (FALG…AVPF), 237-257 (IGMY…FPDW), 259-279 (YVVM…AYAQ), 285-305 (LLAY…TAVD), 312-332 (LLFY…VLAI), 356-376 (LASM…AAVF), 401-421 (ASLI…LYSG), and 436-456 (FTVL…HVVL).

This sequence belongs to the complex I subunit 2 family. As to quaternary structure, NDH-1 is composed of 14 different subunits. Subunits NuoA, H, J, K, L, M, N constitute the membrane sector of the complex.

It localises to the cell inner membrane. The catalysed reaction is a quinone + NADH + 5 H(+)(in) = a quinol + NAD(+) + 4 H(+)(out). In terms of biological role, NDH-1 shuttles electrons from NADH, via FMN and iron-sulfur (Fe-S) centers, to quinones in the respiratory chain. The immediate electron acceptor for the enzyme in this species is believed to be ubiquinone. Couples the redox reaction to proton translocation (for every two electrons transferred, four hydrogen ions are translocated across the cytoplasmic membrane), and thus conserves the redox energy in a proton gradient. This is NADH-quinone oxidoreductase subunit N 1 from Aquifex aeolicus (strain VF5).